The sequence spans 130 residues: UPF0251 protein Swol_2090 (130 aa).

This sequence belongs to the UPF0251 family.

This Syntrophomonas wolfei subsp. wolfei (strain DSM 2245B / Goettingen) protein is UPF0251 protein Swol_2090.